A 245-amino-acid polypeptide reads, in one-letter code: Protein crossbronx (245 aa).

The region spanning 20 to 177 (HQEYKILAEY…VQESIAESKA (158 aa)) is the UBC core domain.

This sequence belongs to the ubiquitin-conjugating enzyme family. FTS subfamily.

In Drosophila mojavensis (Fruit fly), this protein is Protein crossbronx (cbx).